The chain runs to 391 residues: Phosphoglycerate kinase (391 aa).

Substrate contacts are provided by residues 21-23, Arg-36, 59-62, Arg-113, and Arg-146; these read DLN and HLGR. Residues Lys-197, Glu-319, and 345-348 each bind ATP; that span reads GGDT.

Belongs to the phosphoglycerate kinase family. Monomer.

It is found in the cytoplasm. The enzyme catalyses (2R)-3-phosphoglycerate + ATP = (2R)-3-phospho-glyceroyl phosphate + ADP. It participates in carbohydrate degradation; glycolysis; pyruvate from D-glyceraldehyde 3-phosphate: step 2/5. The sequence is that of Phosphoglycerate kinase from Shewanella baltica (strain OS155 / ATCC BAA-1091).